Reading from the N-terminus, the 164-residue chain is Anterior gradient protein 2 (164 aa).

The first 20 residues, methionine 1–alanine 20, serve as a signal peptide directing secretion. 2 short sequence motifs (homodimer stabilization; interchain) span residues serine 34–tryptophan 43 and glutamate 49–threonine 56.

The protein belongs to the AGR family. In terms of assembly, monomer and homodimer.

The protein resides in the secreted. Its subcellular location is the endoplasmic reticulum. The polypeptide is Anterior gradient protein 2 (Xenopus tropicalis (Western clawed frog)).